Reading from the N-terminus, the 382-residue chain is Cytoplasmic tRNA 2-thiolation protein 2 (382 aa).

The protein belongs to the CTU2/NCS2 family.

It localises to the cytoplasm. Its pathway is tRNA modification; 5-methoxycarbonylmethyl-2-thiouridine-tRNA biosynthesis. In terms of biological role, plays a central role in 2-thiolation of mcm(5)S(2)U at tRNA wobble positions of tRNA(Lys), tRNA(Glu) and tRNA(Gln). May act by forming a heterodimer with NCS6 that ligates sulfur from thiocarboxylated URM1 onto the uridine of tRNAs at wobble position. Prior mcm(5) tRNA modification by the elongator complex is required for 2-thiolation. May also be involved in protein urmylation. The protein is Cytoplasmic tRNA 2-thiolation protein 2 of Phaeosphaeria nodorum (strain SN15 / ATCC MYA-4574 / FGSC 10173) (Glume blotch fungus).